Reading from the N-terminus, the 342-residue chain is Cytosolic Fe-S cluster assembly factor NBP35 (342 aa).

Positions 1–45 (MGPSLETPEPVEDVLANPLKQKPQLVAPEPEHCPGPESEQAGTAD) are disordered. 4 residues coordinate [4Fe-4S] cluster: Cys33, Cys47, Cys50, and Cys56. ATP is bound at residue 86–93 (GKGGVGKS). Residues Cys259 and Cys262 each coordinate [4Fe-4S] cluster.

Belongs to the Mrp/NBP35 ATP-binding proteins family. NUBP1/NBP35 subfamily. In terms of assembly, heterotetramer of 2 NBP35 and 2 CFD1 chains. It depends on [4Fe-4S] cluster as a cofactor.

Its subcellular location is the cytoplasm. Its function is as follows. Component of the cytosolic iron-sulfur (Fe/S) protein assembly (CIA) machinery. Required for maturation of extramitochondrial Fe-S proteins. The NBP35-CFD1 heterotetramer forms a Fe-S scaffold complex, mediating the de novo assembly of an Fe-S cluster and its transfer to target apoproteins. This Chaetomium globosum (strain ATCC 6205 / CBS 148.51 / DSM 1962 / NBRC 6347 / NRRL 1970) (Soil fungus) protein is Cytosolic Fe-S cluster assembly factor NBP35.